The sequence spans 383 residues: Delta(12) fatty acid desaturase FAD2 (383 aa).

A disordered region spans residues 1–29 (MGAGGRMQDPTNGGNKTEPEPIQRVPHEK). Over residues 17–29 (TEPEPIQRVPHEK) the composition is skewed to basic and acidic residues. Transmembrane regions (helical) follow at residues 50–70 (VIRS…LYYI) and 85–105 (VAWP…WVIA). The Histidine box-1 motif lies at 106–110 (HECGH). Residues 118-138 (WLDDTVGLVLHSFLLVPYFSW) form a helical membrane-spanning segment. The Histidine box-2 signature appears at 142-146 (HRRHH). 3 helical membrane passes run 180 to 200 (ILTL…FNVS), 226 to 246 (IFIS…LAMT), and 252 to 272 (VLTM…LITF). The Histidine box-3 signature appears at 316-320 (HVAHH).

This sequence belongs to the fatty acid desaturase type 1 family. In terms of tissue distribution, expressed in leaves, flower buds and developing seeds.

The protein resides in the membrane. Its pathway is lipid metabolism; polyunsaturated fatty acid biosynthesis. Functionally, catalyzes the desaturation of oleic acid to linoleic acid. Introduces a double bond at position 12 of 16:1(9Z) and 18:1(9Z). The chain is Delta(12) fatty acid desaturase FAD2 from Calendula officinalis (Pot marigold).